The chain runs to 654 residues: tRNA uridine 5-carboxymethylaminomethyl modification enzyme MnmG (654 aa).

17-22 (GGGHAG) lines the FAD pocket. 289–303 (GPRYCPSIEDKIVKF) lines the NAD(+) pocket.

It belongs to the MnmG family. Homodimer. Heterotetramer of two MnmE and two MnmG subunits. FAD serves as cofactor.

The protein localises to the cytoplasm. NAD-binding protein involved in the addition of a carboxymethylaminomethyl (cmnm) group at the wobble position (U34) of certain tRNAs, forming tRNA-cmnm(5)s(2)U34. The chain is tRNA uridine 5-carboxymethylaminomethyl modification enzyme MnmG from Prochlorococcus marinus (strain MIT 9515).